Here is a 724-residue protein sequence, read N- to C-terminus: Transcription factor dcp-66 (724 aa).

Polar residues-rich tracts occupy residues 1–12 (MAQVQQVPSSPM) and 56–70 (GASTSIDTDDLQLSP). Disordered regions lie at residues 1–23 (MAQVQQVPSSPMNGIPEKNGNGL) and 55–129 (NGAS…KRRL). Positions 85–95 (AQEKIKLKDDI) are enriched in basic and acidic residues. Residues 105-119 (DDDDMEDEELGDEIN) show a composition bias toward acidic residues. Residues 186-216 (EEQLRERLNMRREAENQLREEEAKLLVLRKM) adopt a coiled-coil conformation. 2 disordered regions span residues 328 to 361 (KELSAAETNASASASPAVQQSQQAQQPQQAQITQ) and 523 to 590 (AAPA…QLQQ). Residues 332–358 (AAETNASASASPAVQQSQQAQQPQQAQ) are compositionally biased toward low complexity. Polar residues-rich tracts occupy residues 527-541 (TSQTIPTSSTATVSS) and 551-564 (IPSSTGSSTPTQAV). Over residues 565-590 (KTSTPIHSTPKSSSSSAKKTAAQLQQ) the composition is skewed to low complexity.

Expressed at low levels in excretory cell, pharynx, vulva, and posterior neurons in adults. Strongly expressed in the excretory cell and more weakly in the pharynx in larva. Embryonic expression in the excretory cell.

Its subcellular location is the nucleus. Functionally, transcription factor which binds to the 5'-CCATACATTA-3' motif found in the promoter region of pgp-12 and activates its expression in the excretory cell. This is Transcription factor dcp-66 from Caenorhabditis elegans.